A 699-amino-acid polypeptide reads, in one-letter code: Ubiquitin-like modifier-activating enzyme ATG7 (699 aa).

Residues 370–375 (GAGTLG) carry the GXGXXG motif motif. Cysteine 550 (glycyl thioester intermediate) is an active-site residue. The interval 653–691 (ALASRDYVAELSGLAEVQRLAEKAAAEMQWSEDEEGMGE) is homodimerization.

This sequence belongs to the ATG7 family. Homodimer. Interacts with ATG8 through a thioester bond between Cys-550 and the C-terminal Gly of ATG8 and with ATG12 through a thioester bond between Cys-550 and the C-terminal Gly of ATG12. Also interacts with ATG3.

Its subcellular location is the cytoplasm. The protein resides in the preautophagosomal structure. Functionally, E1-like activating enzyme involved in the 2 ubiquitin-like systems required for cytoplasm to vacuole transport (Cvt) and autophagy. Activates ATG12 for its conjugation with ATG5 and ATG8 for its conjugation with phosphatidylethanolamine. Both systems are needed for the ATG8 association to Cvt vesicles and autophagosomes membranes. Autophagy is essential for maintenance of amino acid levels and protein synthesis under nitrogen starvation. Required for selective autophagic degradation of the nucleus (nucleophagy) as well as for mitophagy which contributes to regulate mitochondrial quantity and quality by eliminating the mitochondria to a basal level to fulfill cellular energy requirements and preventing excess ROS production. Required for normal mycelial growth and conidiogenesis. This is Ubiquitin-like modifier-activating enzyme ATG7 from Sordaria macrospora (strain ATCC MYA-333 / DSM 997 / K(L3346) / K-hell).